Here is a 604-residue protein sequence, read N- to C-terminus: ATP-dependent RNA helicase DED1 (604 aa).

The span at 1–19 shows a compositional bias: polar residues; it reads MAELSEQVQNLSINDNNEN. The segment at 1–55 is disordered; it reads MAELSEQVQNLSINDNNENGYVPPHLRGKPRSARNNSSNYNNNNGGYNGGRGGGS. Position 2 is an N-acetylalanine (A2). Residues 34–45 show a composition bias toward low complexity; the sequence is RNNSSNYNNNNG. Residues 46 to 55 are compositionally biased toward gly residues; that stretch reads GYNGGRGGGS. R51 is subject to Omega-N-methylarginine. At R62 the chain carries Dimethylated arginine; alternate. The residue at position 62 (R62) is an Omega-N-methylarginine; alternate. Over residues 67–76 the composition is skewed to gly residues; the sequence is NGGFFGGNNG. The tract at residues 67-94 is disordered; sequence NGGFFGGNNGGSRSNGRSGGRWIDGKHV. The short motif at 142–170 is the Q motif element; it reads TEFTSPPLDGLLLENIKLARFTKPTPVQK. K158 participates in a covalent cross-link: Glycyl lysine isopeptide (Lys-Gly) (interchain with G-Cter in ubiquitin). One can recognise a Helicase ATP-binding domain in the interval 173–362; sequence VPIVANGRDL…RDFLSDYIFL (190 aa). ATP is bound at residue 186 to 193; sequence AQTGSGKT. A phosphoserine mark is found at S215, S218, and S263. The short motif at 306–309 is the DEAD box element; it reads DEAD. One can recognise a Helicase C-terminal domain in the interval 373-533; that stretch reads NITQKVLYVE…EVPSFLKDAM (161 aa). The interval 533–604 is disordered; sequence MMSAPGSRSN…SGGSNNSSWW (72 aa). A phosphoserine mark is found at S535, S539, and S543. A Dimethylated arginine; alternate modification is found at R545. R545 is modified (omega-N-methylarginine; alternate). 2 positions are modified to phosphoserine: S572 and S576. R578 bears the Omega-N-methylarginine mark. Residues 584-604 show a composition bias toward low complexity; sequence GSDSKSSGWGNSGGSNNSSWW. The residue at position 598 (S598) is a Phosphoserine.

Belongs to the DEAD box helicase family. DDX3/DED1 subfamily. In terms of assembly, interacts with the L-A virus GAG protein and the whole L-A virus particles.

It localises to the cytoplasm. It carries out the reaction ATP + H2O = ADP + phosphate + H(+). Functionally, ATP-binding RNA helicase involved in translation initiation. Remodels RNA in response to ADP and ATP concentrations by facilitating disruption, but also formation of RNA duplexes. Has weak ATP-dependent affinity for dsRNA, but strong ATP-dependent affinity for ssRNA. Acts as a virus host factor involved in the replication of the MBV and the L-A viruses by promoting the negative-strand RNA synthesis. May be involved in recognition of the preinitiation complex and DNA binding of the RNA polymerase III and play a role in mRNA splicing. The sequence is that of ATP-dependent RNA helicase DED1 from Saccharomyces cerevisiae (strain ATCC 204508 / S288c) (Baker's yeast).